A 335-amino-acid chain; its full sequence is Methylthioribose-1-phosphate isomerase (335 aa).

Substrate contacts are provided by residues 43-45, R86, and Q193; that span reads RGA. The Proton donor role is filled by D234. Position 244–245 (244–245) interacts with substrate; it reads NK.

The protein belongs to the eIF-2B alpha/beta/delta subunits family. MtnA subfamily.

It carries out the reaction 5-(methylsulfanyl)-alpha-D-ribose 1-phosphate = 5-(methylsulfanyl)-D-ribulose 1-phosphate. It participates in amino-acid biosynthesis; L-methionine biosynthesis via salvage pathway; L-methionine from S-methyl-5-thio-alpha-D-ribose 1-phosphate: step 1/6. Its function is as follows. Catalyzes the interconversion of methylthioribose-1-phosphate (MTR-1-P) into methylthioribulose-1-phosphate (MTRu-1-P). The protein is Methylthioribose-1-phosphate isomerase of Parabacteroides distasonis (strain ATCC 8503 / DSM 20701 / CIP 104284 / JCM 5825 / NCTC 11152).